The following is a 198-amino-acid chain: Guanylate kinase (198 aa).

A Guanylate kinase-like domain is found at 8–188 (GRVVVLSGPS…ACSELVSLLV (181 aa)). 15 to 22 (GPSAVGKS) lines the ATP pocket.

It belongs to the guanylate kinase family.

It is found in the cytoplasm. The enzyme catalyses GMP + ATP = GDP + ADP. Its function is as follows. Essential for recycling GMP and indirectly, cGMP. This chain is Guanylate kinase, found in Mycobacterium sp. (strain MCS).